The following is a 660-amino-acid chain: Bifunctional polymyxin resistance protein ArnA (660 aa).

A formyltransferase ArnAFT region spans residues 1–304; it reads MKAVIFAYHD…TLGLVAGARL (304 aa). Catalysis depends on His-104, which acts as the Proton donor; for formyltransferase activity. (6R)-10-formyltetrahydrofolate-binding positions include Arg-114 and 136–140; that span reads VKRAD. Residues 314 to 660 form a dehydrogenase ArnADH region; the sequence is RRIRVLILGV…RSVDVAERAS (347 aa). Residues Asp-347 and 368–369 each bind NAD(+); that span reads DI. Residues Ala-393, Tyr-398, and 432–433 contribute to the UDP-alpha-D-glucuronate site; that span reads TS. The Proton acceptor; for decarboxylase activity role is filled by Glu-434. Residues Arg-460, Asn-492, 526–535, and Tyr-613 each bind UDP-alpha-D-glucuronate; that span reads KLIDGGQQKR. Arg-619 serves as the catalytic Proton donor; for decarboxylase activity.

This sequence in the N-terminal section; belongs to the Fmt family. UDP-L-Ara4N formyltransferase subfamily. It in the C-terminal section; belongs to the NAD(P)-dependent epimerase/dehydratase family. UDP-glucuronic acid decarboxylase subfamily. Homohexamer, formed by a dimer of trimers.

It catalyses the reaction UDP-alpha-D-glucuronate + NAD(+) = UDP-beta-L-threo-pentopyranos-4-ulose + CO2 + NADH. The enzyme catalyses UDP-4-amino-4-deoxy-beta-L-arabinose + (6R)-10-formyltetrahydrofolate = UDP-4-deoxy-4-formamido-beta-L-arabinose + (6S)-5,6,7,8-tetrahydrofolate + H(+). It functions in the pathway nucleotide-sugar biosynthesis; UDP-4-deoxy-4-formamido-beta-L-arabinose biosynthesis; UDP-4-deoxy-4-formamido-beta-L-arabinose from UDP-alpha-D-glucuronate: step 1/3. It participates in nucleotide-sugar biosynthesis; UDP-4-deoxy-4-formamido-beta-L-arabinose biosynthesis; UDP-4-deoxy-4-formamido-beta-L-arabinose from UDP-alpha-D-glucuronate: step 3/3. Its pathway is bacterial outer membrane biogenesis; lipopolysaccharide biosynthesis. Functionally, bifunctional enzyme that catalyzes the oxidative decarboxylation of UDP-glucuronic acid (UDP-GlcUA) to UDP-4-keto-arabinose (UDP-Ara4O) and the addition of a formyl group to UDP-4-amino-4-deoxy-L-arabinose (UDP-L-Ara4N) to form UDP-L-4-formamido-arabinose (UDP-L-Ara4FN). The modified arabinose is attached to lipid A and is required for resistance to polymyxin and cationic antimicrobial peptides. This chain is Bifunctional polymyxin resistance protein ArnA, found in Salmonella choleraesuis (strain SC-B67).